A 224-amino-acid polypeptide reads, in one-letter code: 7-cyano-7-deazaguanine synthase (224 aa).

Residue 9–19 (ISGGMDSTLCA) coordinates ATP. The Zn(2+) site is built by cysteine 190, cysteine 198, cysteine 201, and cysteine 204.

This sequence belongs to the QueC family. Zn(2+) is required as a cofactor.

The enzyme catalyses 7-carboxy-7-deazaguanine + NH4(+) + ATP = 7-cyano-7-deazaguanine + ADP + phosphate + H2O + H(+). Its pathway is purine metabolism; 7-cyano-7-deazaguanine biosynthesis. Its function is as follows. Catalyzes the ATP-dependent conversion of 7-carboxy-7-deazaguanine (CDG) to 7-cyano-7-deazaguanine (preQ(0)). This is 7-cyano-7-deazaguanine synthase from Campylobacter jejuni subsp. jejuni serotype O:6 (strain 81116 / NCTC 11828).